A 505-amino-acid chain; its full sequence is MTCGSGFGGRAFSCISACGPRPGRCCITAAPYRGISCYRGLTGGFGSHSVCGGFRAGSCGRSFGYRSGGVCGPSPPCITTVSVNESLLTPLNLEIDPNAQCVKQEEKEQIKSLNSRFAAFIDKVRFLEQQNKLLETKLQFYQNRECCQSNLEPLFEGYIETLRREAECVEADSGRLASELNHVQEVLEGYKKKYEEEVSLRATAENEFVALKKDVDCAYLRKSDLEANVEALIQEIDFLRRLYEEEILILQSHISDTSVVVKLDNSRDLNMDCIIAEIKAQYDDIVTRSRAEAESWYRSKCEEMKATVIRHGETLRRTKEEINELNRMIQRLTAEVENAKCQNSKLEAAVAQSEQQGEAALSDARCKLAELEGALQKAKQDMACLIREYQEVMNSKLGLDIEIATYRRLLEGEEQRLCEGIGAVNVCVSSSRGGVVCGDLCVSGSRPVTGSVCSAPCNGNVAVSTGLCAPCGQLNTTCGGGSCGVGSCGISSLGVGSCGSSCRKC.

The head stretch occupies residues 1 to 106 (MTCGSGFGGR…PNAQCVKQEE (106 aa)). The IF rod domain occupies 106–417 (EKEQIKSLNS…RLLEGEEQRL (312 aa)). The interval 107 to 141 (KEQIKSLNSRFAAFIDKVRFLEQQNKLLETKLQFY) is coil 1A. The tract at residues 142 to 151 (QNRECCQSNL) is linker 1. Positions 152-252 (EPLFEGYIET…YEEEILILQS (101 aa)) are coil 1B. A Glycyl lysine isopeptide (Lys-Gly) (interchain with G-Cter in SUMO1) cross-link involves residue K212. Residues 253–269 (HISDTSVVVKLDNSRDL) form a linker 12 region. The coil 2 stretch occupies residues 270-413 (NMDCIIAEIK…ATYRRLLEGE (144 aa)). The segment at 414-505 (EQRLCEGIGA…GSCGSSCRKC (92 aa)) is tail.

Belongs to the intermediate filament family. In terms of assembly, heterotetramer of two type I and two type II keratins. As to expression, abundantly expressed in the differentiating cortex of growing (anagen) hair. Expression is restricted to the keratinocytes of the hair cortex and is absent from inner root sheath and medulla. Expressed in malignant lymph node tissue in breast carcinoma tissue.

This is Keratin, type II cuticular Hb1 (KRT81) from Homo sapiens (Human).